The sequence spans 477 residues: MDGFYDQQVPYVVTNSQRGRNCTEKPTNVRKRKFINRDLAHDSEELFQDLSQLQETWLAEAQVPDNDEQFVPDYQAESLAFHGLPLKIKKEPHSPCSELGSACSQEQPFKFSYGEKCLYNVSAYDQKPQVGMRPSNPPTPSSTPVSPLHHASPNTAHTPKPDRAFPAHLPPSQSIPDSTYPMDHRFRRQLSEPCNSFPPLPTMPREGRPMYQRQMSEPNIPFPPQGFKQEYHDPVYEHTTMVGGAASQSFPPPLMIKQEPRDFAYDSEVPSCHSIYMRQEGFLAHPSRTEGCMFEKGPRQFYDDTCVVPEKFDGDIKQEPGMYREGPTYQRRGSLQLWQFLVALLDDPSNSHFIAWTGRGMEFKLIEPEEVARRWGIQKNRPAMNYDKLSRSLRYYYEKGIMQKVAGERYVYKFVCDPEALFSMAFPDNQRPLLKTDMERHINEEDTVPLSHFDESMTYMPEGGCCNPHPYNEGYVY.

At serine 94 the chain carries Phosphoserine. The segment at 128–179 is disordered; sequence PQVGMRPSNPPTPSSTPVSPLHHASPNTAHTPKPDRAFPAHLPPSQSIPDST. Phosphoserine; by RPS6KA1 and RPS6KA5 is present on residues serine 191 and serine 216. Residue lysine 317 forms a Glycyl lysine isopeptide (Lys-Gly) (interchain with G-Cter in SUMO2) linkage. Residues 335–415 constitute a DNA-binding region (ETS); it reads LQLWQFLVAL…AGERYVYKFV (81 aa).

This sequence belongs to the ETS family. Post-translationally, sumoylated. Phosphorylated at Ser-191 and Ser-216 by RPS6KA1 and RPS6KA5; phosphorylation activates transcriptional activity. Abundant in kidney. Moderate levels seen in the heart, brain, lung, embryo and lower levels seen in spleen, intestine, testis and thymus.

It localises to the nucleus. Functionally, transcriptional activator that binds to DNA sequences containing the consensus pentanucleotide 5'-CGGA[AT]-3'. Required for olfactory dopaminergic neuron differentiation; may directly activate expression of tyrosine hydroxylase (TH). The protein is ETS translocation variant 1 of Mus musculus (Mouse).